The chain runs to 322 residues: Putative small RNA degrading nuclease 4 (322 aa).

One can recognise an Exonuclease domain in the interval 75 to 213 (MLALDCEMVL…HDAAAAMKLA (139 aa)).

This sequence belongs to the REXO1/REXO3 family.

It localises to the nucleus. Functionally, putative 3'-5' exonuclease degrading single-stranded small RNAs. The protein is Putative small RNA degrading nuclease 4 (SDN4) of Arabidopsis thaliana (Mouse-ear cress).